The chain runs to 581 residues: Serine/threonine-protein kinase PINK1, mitochondrial (581 aa).

The transit peptide at 1 to 77 directs the protein to the mitochondrion; it reads MAVRQALGRG…RFFRQSVAGL (77 aa). The Mitochondrial intermembrane portion of the chain corresponds to 78–93; it reads AARLQRQFVVRAWGCA. The helical transmembrane segment at 94–110 threads the bilayer; it reads GPCGRAVFLAFGLGLGL. The segment at 111–117 is required for outer membrane localization; that stretch reads IEEKQAE. Topologically, residues 111–581 are cytoplasmic; that stretch reads IEEKQAESRR…LLLCSWRAAL (471 aa). The 356-residue stretch at 156–511 folds into the Protein kinase domain; sequence YLIGQSIGKG…VAANVLHLSL (356 aa). ATP-binding positions include 162–170 and lysine 186; that span reads IGKGCSAAV. Residues 189-208 form a disordered region; that stretch reads GLLPGRGPGTSAPGEGQERA. A Phosphoserine; by autocatalysis modification is found at serine 228. The active-site Proton acceptor is the aspartate 362. Position 402 is a phosphoserine; by autocatalysis (serine 402).

Belongs to the protein kinase superfamily. Ser/Thr protein kinase family. Upon mitochondrial depolarization, it forms a supercomplex with TOM and TIM23 complexes. PINK1-TOM-TIM23 supercomplex formation requires PINK1 interaction with TOMM20 and TOMM70 and is critical for PINK1 stabilization at the outer mitochondrial membrane, kinase activation and downstream mitophagy. Upon mitochondrial depolarization, interacts with TIMM23; the interaction is required for PINK1 accumulation at the outer mitochondrial membrane, kinase activation by autophosphorylation and PRKN recruitement to mitochondria. Interacts with PRKN. Interacts with FBXO7. Forms a complex with PRKN and PARK7. Interacts with NENF. Requires Mg(2+) as cofactor. In terms of processing, proteolytically cleaved. In healthy cells, the precursor is continuously imported into the inner mitochondrial membrane (IMM), where it is proteolytically cleaved by mitochondrial-processing peptidase (MPP) and then undergoes further proteolytic cleavage by PARL or AFG3L2 to give rise to the 52 kDa short form. The 52 kDa short form is then released into the cytosol where it rapidly undergoes proteasome-dependent degradation. In unhealthy cells, when cellular stress conditions lead to the loss of mitochondrial membrane potential, mitochondrial import is impaired leading to the precursor accumulating on the outer mitochondrial membrane (OMM). If accumulation at the OMM fails and it is imported into the depolarized mitochondria, it undergoes cleavage by the IMM protease OMA1, promoting its subsequent degradation by the proteasome. Autophosphorylated. Loss of mitochondrial membrane potential results in the precursor accumulating on the outer mitochondrial membrane (OMM) where it is activated by autophosphorylation. Autophosphorylation at Ser-228 and Ser-402 is sufficient and essential for selective recruitment of PRKN to depolarized mitochondria, via PINK1-dependent phosphorylation of ubiquitin and maybe PRKN. In terms of tissue distribution, highly expressed in heart, skeletal muscle and testis, and at lower levels in brain, placenta, liver, kidney, pancreas, prostate, ovary and small intestine. Present in the embryonic testis from an early stage of development.

The protein localises to the mitochondrion outer membrane. Its subcellular location is the mitochondrion inner membrane. It localises to the cytoplasm. It is found in the cytosol. It carries out the reaction L-seryl-[protein] + ATP = O-phospho-L-seryl-[protein] + ADP + H(+). The enzyme catalyses L-threonyl-[protein] + ATP = O-phospho-L-threonyl-[protein] + ADP + H(+). Serine/threonine-protein kinase which acts as a sensor of mitochondrial damage and protects against mitochondrial dysfunction during cellular stress. It phosphorylates mitochondrial proteins to coordinate mitochondrial quality control mechanisms that remove and replace dysfunctional mitochondrial components. Depending on the severity of mitochondrial damage, activity ranges from preventing apoptosis and stimulating mitochondrial biogenesis to eliminating severely damaged mitochondria via PINK1-PRKN-dependent mitophagy. When cellular stress results in irreversible mitochondrial damage, PINK1 accumulates at the outer mitochondrial membrane (OMM) where it phosphorylates pre-existing polyubiquitin chains at 'Ser-65', recruits PRKN from the cytosol to the OMM and activates PRKN by phosphorylation at 'Ser-65'; activated PRKN then ubiquinates VDAC1 and other OMM proteins to initiate mitophagy. The PINK1-PRKN pathway also promotes fission of damaged mitochondria through phosphorylation and PRKN-dependent degradation of mitochondrial proteins involved in fission such as MFN2. This prevents the refusion of unhealthy mitochondria with the mitochondrial network or initiates mitochondrial fragmentation facilitating their later engulfment by autophagosomes. Also promotes mitochondrial fission independently of PRKN and ATG7-mediated mitophagy, via the phosphorylation and activation of DNM1L. Regulates motility of damaged mitochondria by promoting the ubiquitination and subsequent degradation of MIRO1 and MIRO2; in motor neurons, this likely inhibits mitochondrial intracellular anterograde transport along the axons which probably increases the chance of the mitochondria undergoing mitophagy in the soma. Required for ubiquinone reduction by mitochondrial complex I by mediating phosphorylation of complex I subunit NDUFA10. Phosphorylates LETM1, positively regulating its mitochondrial calcium transport activity. This chain is Serine/threonine-protein kinase PINK1, mitochondrial (PINK1), found in Homo sapiens (Human).